Here is a 285-residue protein sequence, read N- to C-terminus: ATP phosphoribosyltransferase (285 aa).

It belongs to the ATP phosphoribosyltransferase family. Long subfamily. Mg(2+) is required as a cofactor.

The protein localises to the cytoplasm. It catalyses the reaction 1-(5-phospho-beta-D-ribosyl)-ATP + diphosphate = 5-phospho-alpha-D-ribose 1-diphosphate + ATP. Its pathway is amino-acid biosynthesis; L-histidine biosynthesis; L-histidine from 5-phospho-alpha-D-ribose 1-diphosphate: step 1/9. Its activity is regulated as follows. Feedback inhibited by histidine. Functionally, catalyzes the condensation of ATP and 5-phosphoribose 1-diphosphate to form N'-(5'-phosphoribosyl)-ATP (PR-ATP). Has a crucial role in the pathway because the rate of histidine biosynthesis seems to be controlled primarily by regulation of HisG enzymatic activity. The polypeptide is ATP phosphoribosyltransferase (Metallosphaera sedula (strain ATCC 51363 / DSM 5348 / JCM 9185 / NBRC 15509 / TH2)).